The primary structure comprises 267 residues: MSQHNILEALNVRVVGTGDRILFLAHGFGTDQSAWHLILPYFTQNYRVVLYDLVCAGSVNPDYFDFNRYTTLDPYVDDLLNIVDSLGIQNCAYVGHSVSAMIGIIASIRRPELFSKLILIGFSPRFLNDEDYHGGFEEGEIEKVFSAMEANYEAWVHGFAPLAVGADVPAAVREFSRTLFNMRPDISLFVSRTVFNSDLRGVLGLVRVPTCVIQTAKDVSVPASVAEYLRSHLGGDTTVETLKTEGHLPQLSAPAQLAQFLRRALPR.

Residue serine 97 is the Nucleophile of the active site. Active-site residues include aspartate 218 and histidine 247.

Belongs to the AB hydrolase superfamily. In terms of assembly, interacts with SMXL6, SMXL7 and SMXL8. The interaction with SMXLs occurs in the presence of (2'R) stereoisomers of strigolactones, but not (2'S) stereoisomers. Interacts with MAX2. Forms a complex with MAX2 and SKP1A/ASK1 in presence of strigolactone. Expressed at high levels in rosette and cauline leaves and at lower levels in axillary buds, inflorescences, stems, roots and developing vascular tissue of cotyledons.

It localises to the cytoplasm. Its subcellular location is the nucleus. In terms of biological role, involved in strigolactone signaling pathway. Does not move long distances acropetally in the plant to regulate shoot branching and is rapidly degraded in the presence of strigolactones. Functions downstream of strigolactone synthesis, as a component of hormone signaling and as an enzyme that participates in the conversion of strigolactones to the bioactive form. Acts probably as a strigolactone receptor. Strigolactones are hormones that inhibit tillering and shoot branching through the MAX-dependent pathway, contribute to the regulation of shoot architectural response to phosphate-limiting conditions and function as rhizosphere signal that stimulates hyphal branching of arbuscular mycorrhizal fungi and trigger seed germination of root parasitic weeds. Hydrolyzes methyl carlactonoate (MeCLA), but not carlactone (CL) or carlactonoic acid (CLA). Hydrolyzes the butenolide ring of strigolactones. The initial nucleophilic attack causes an electron shift, followed by the addition of a water molecule, to lead to the release of the ABC ring product and the formation of a 'Ser-97'-stabilized open lactone intermediate. Has no esterase activity for 4-nitrophenyl butyrate. Binds and hydrolyzes the synthetic strigolactone analog GR24 in vitro. Forms a stable covalent complex with the D-ring of strigolactone, which is essential for hormone bioactivity. The D-ring is attached to His-247 of the catalytic triad. The hydrolysis of strigolactone into a covalently linked intermediate molecule initiates a conformational change of D14 to facilitate interaction with MAX2 and formation of the D14-MAX2-SKP1/ASK1 complex to trigger strigolactone signaling. This mechanism defines D14 as a non-canonical hormone receptor with dual functions to generate and sense the active form of strigolactone. The polypeptide is Strigolactone esterase D14 (Arabidopsis thaliana (Mouse-ear cress)).